Consider the following 286-residue polypeptide: Prepilin leader peptidase/N-methyltransferase (286 aa).

A helical membrane pass occupies residues 10-30; that stretch reads FAVPLAAVLGLLVGSFLNVVI. C70, C73, C95, and C98 together coordinate Zn(2+). 6 helical membrane passes run 102–122, 126–146, 157–177, 181–201, 224–244, and 250–270; these read ISIRYPLIELLTGVLFGLVAW, WSWITLGGLILTAFLISLTFI, MTLPLIWLGLIFNLDGGFVPL, VLGAVAGYSSLWLLCAVYKLL, ISALPVLIFVSSLIGLVAAIV, and GRHFAFGPALTVSGWIIFTAN.

It belongs to the peptidase A24 family. Requires Zn(2+) as cofactor.

It localises to the cell inner membrane. The enzyme catalyses Typically cleaves a -Gly-|-Phe- bond to release an N-terminal, basic peptide of 5-8 residues from type IV prepilin, and then N-methylates the new N-terminal amino group, the methyl donor being S-adenosyl-L-methionine.. Functionally, plays an essential role in type IV pili and type II pseudopili formation by proteolytically removing the leader sequence from substrate proteins and subsequently monomethylating the alpha-amino group of the newly exposed N-terminal phenylalanine. The protein is Prepilin leader peptidase/N-methyltransferase (pilD) of Neisseria gonorrhoeae.